Here is a 316-residue protein sequence, read N- to C-terminus: Pantothenate kinase (316 aa).

ATP is bound at residue Gly-95–Ser-102.

It belongs to the prokaryotic pantothenate kinase family.

It is found in the cytoplasm. The catalysed reaction is (R)-pantothenate + ATP = (R)-4'-phosphopantothenate + ADP + H(+). It functions in the pathway cofactor biosynthesis; coenzyme A biosynthesis; CoA from (R)-pantothenate: step 1/5. This chain is Pantothenate kinase, found in Serratia proteamaculans (strain 568).